Reading from the N-terminus, the 146-residue chain is Large ribosomal subunit protein bL17 (146 aa).

The segment at arginine 118–alanine 146 is disordered. The segment covering alanine 134–alanine 146 has biased composition (acidic residues).

Belongs to the bacterial ribosomal protein bL17 family. As to quaternary structure, part of the 50S ribosomal subunit. Contacts protein L32.

The protein is Large ribosomal subunit protein bL17 of Acidiphilium cryptum (strain JF-5).